Here is a 388-residue protein sequence, read N- to C-terminus: Acyl-CoA dehydrogenase fadE12 (388 aa).

It belongs to the acyl-CoA dehydrogenase family. Requires FAD as cofactor.

It catalyses the reaction a 2,3-saturated acyl-CoA + A = a 2,3-dehydroacyl-CoA + AH2. This chain is Acyl-CoA dehydrogenase fadE12 (fadE12), found in Mycobacterium tuberculosis (strain CDC 1551 / Oshkosh).